The primary structure comprises 51 residues: Sperm protamine P1 (51 aa).

Intrachain disulfides connect Cys-7–Cys-15 and Cys-38–Cys-48.

It belongs to the protamine P1 family. Cross-linked by interchain disulfide bonds around the DNA-helix. Post-translationally, phosphorylated by SRPK1. Testis.

It localises to the nucleus. It is found in the chromosome. Protamines substitute for histones in the chromatin of sperm during the haploid phase of spermatogenesis. They compact sperm DNA into a highly condensed, stable and inactive complex. The chain is Sperm protamine P1 (Prm1) from Rattus norvegicus (Rat).